The chain runs to 394 residues: MNKKTIRDVEVRGKRVFCRVDFNVPMEQGAITDDTRIRAALPTIRYLIEHGAKVILASHLGRPKGKVVEELRLDAVAKRLGELLERPVAKTNEAVGDEVKAAVDRLNEGDVLLLENVRFYPGEEKNDPELAKAFAELADLYVNDAFGAAHRAHASTEGIAHYLPAVAGFLMEKELEVLGKALSNPDRPFTAIIGGAKVKDKIGVIDNLLEKVDNLIIGGGLAYTFVKALGHDVGKSLLEEDKIELAKSFMEKAKEKGVRFYMPVDVVVADRFANDANTKVVAIDAIPSDWEALDIGPKTRELYRDVIRQSKLVVWNGPMGVFEMEAFAHGTKAIAEALAEAPDTYSVIGGGDSAAAVEKFGLADKMDHISTGGGASLEFMEGKQLPGVVALEDK.

Substrate is bound by residues 21–23, Arg-36, 59–62, Arg-118, and Arg-151; these read DFN and HLGR. Phosphoserine is present on Ser-183. ATP is bound at residue Lys-201. Position 299 is a phosphothreonine (Thr-299). Residues Glu-323 and 350 to 353 each bind ATP; that span reads GGDS.

The protein belongs to the phosphoglycerate kinase family. Monomer.

Its subcellular location is the cytoplasm. The catalysed reaction is (2R)-3-phosphoglycerate + ATP = (2R)-3-phospho-glyceroyl phosphate + ADP. Its pathway is carbohydrate degradation; glycolysis; pyruvate from D-glyceraldehyde 3-phosphate: step 2/5. This chain is Phosphoglycerate kinase, found in Geobacillus kaustophilus (strain HTA426).